A 71-amino-acid polypeptide reads, in one-letter code: uncharacterized protein (71 aa).

The next 2 membrane-spanning stretches (helical) occupy residues F9 to F29 and F41 to L61.

The protein resides in the membrane. This is an uncharacterized protein from Acheta domesticus (House cricket).